Consider the following 496-residue polypeptide: Probable cytosol aminopeptidase (496 aa).

2 residues coordinate Mn(2+): Lys-251 and Asp-256. Residue Lys-263 is part of the active site. Mn(2+)-binding residues include Asp-274, Asp-333, and Glu-335. Arg-337 is an active-site residue.

It belongs to the peptidase M17 family. Mn(2+) is required as a cofactor.

Its subcellular location is the cytoplasm. The catalysed reaction is Release of an N-terminal amino acid, Xaa-|-Yaa-, in which Xaa is preferably Leu, but may be other amino acids including Pro although not Arg or Lys, and Yaa may be Pro. Amino acid amides and methyl esters are also readily hydrolyzed, but rates on arylamides are exceedingly low.. It catalyses the reaction Release of an N-terminal amino acid, preferentially leucine, but not glutamic or aspartic acids.. Presumably involved in the processing and regular turnover of intracellular proteins. Catalyzes the removal of unsubstituted N-terminal amino acids from various peptides. This chain is Probable cytosol aminopeptidase, found in Acidovorax ebreus (strain TPSY) (Diaphorobacter sp. (strain TPSY)).